A 655-amino-acid polypeptide reads, in one-letter code: A-type voltage-gated potassium channel KCND3 (655 aa).

The Cytoplasmic segment spans residues 1–182 (MAAGVAAWLP…FENPHTSTLA (182 aa)). Residues 6 to 21 (AAWLPFARAAAIGWMP) are interaction with KCNIP1 and KCNIP2. The tract at residues 70–78 (EKEFFFNED) is interaction with KCNIP1. Zn(2+) contacts are provided by His-104, Cys-110, Cys-131, and Cys-132. Ser-153 carries the post-translational modification Phosphoserine. The helical transmembrane segment at 183-204 (LVFYYVTGFFIAVSVITNVVET) threads the bilayer. Residues 205-223 (VPCGTVPGSKELPCGERYS) are Extracellular-facing. The chain crosses the membrane as a helical span at residues 224–246 (VAFFCLDTACVMIFTVEYLLRLF). Topologically, residues 247 to 253 (AAPSRYR) are cytoplasmic. The chain crosses the membrane as a helical span at residues 254-277 (FIRSVMSIIDVVAIMPYYIGLVMT). Residues 278–283 (NNEDVS) are Extracellular-facing. Residues 284–306 (GAFVTLRVFRVFRIFKFSRHSQG) traverse the membrane as a helical; Voltage-sensor segment. Residues 307–318 (LRILGYTLKSCA) are Cytoplasmic-facing. A helical membrane pass occupies residues 319-343 (SELGFLLFSLTMAIIIFATVMFYAE). The Extracellular segment spans residues 344–352 (KGSSASKFT). An intramembrane region (helical) is located at residues 353–366 (SIPASFWYTIVTMT). K(+) is bound by residues Thr-367, Leu-368, Gly-369, and Tyr-370. The Selectivity filter motif lies at 367-372 (TLGYGD). An intramembrane segment occupies 367 to 374 (TLGYGDMV). A helical membrane pass occupies residues 378-400 (IAGKIFGSICSLSGVLVIALPVP). At 401–655 (VIVSNFSRIY…ASNVVKVSAL (255 aa)) the chain is on the cytoplasmic side. Thr-459 carries the phosphothreonine modification. The tract at residues 470-487 (SLIESQHHHLLHCLEKTT) is interaction with KCNIP1 and KCNIP2. The tract at residues 472–487 (IESQHHHLLHCLEKTT) is mediates dendritic targeting. The span at 525–548 (MQNYPSTRSPSLSSHPGLTTTCCS) shows a compositional bias: polar residues. The segment at 525–565 (MQNYPSTRSPSLSSHPGLTTTCCSRRSKKTTHLPNSNLPAT) is disordered. Ser-569 bears the Phosphoserine; by CaMK2D mark. The residue at position 585 (Ser-585) is a Phosphoserine. The segment at 615-655 (ISIPTPPALTPEGESRPPPASPGPNTNIPSIASNVVKVSAL) is disordered. The segment covering 637-647 (GPNTNIPSIAS) has biased composition (polar residues).

It belongs to the potassium channel family. D (Shal) (TC 1.A.1.2) subfamily. Kv4.3/KCND3 sub-subfamily. Homotetramer. Heterotetramer with KCND2. Associates with the regulatory subunits KCNIP3 and KCNIP4. Interacts with KCNE1, KCNE2, SCN1B and KCNAB1 and DLG1. Component of heteromultimeric potassium channels. Identified in potassium channel complexes containing KCND1, KCND2, KCND3, KCNIP1, KCNIP2, KCNIP3, KCNIP4, DPP6 and DPP10. Interacts with KCNIP1; each KCNIP1 monomer interacts with two adjacent KCND3 subunits, through both the N-terminal inactivation ball of a KCND3 subunit and a C-terminal helix from the adjacent KCND3 subunit, clamping them together; this interaction stabilizes the tetrameric form and modulates the channel gating kinetics namely channel activation and inactivation kinetics and rate of recovery from inactivation. Interacts with DPP6; this interaction modulates the channel gating kinetics namely channel activation and inactivation kinetics and rate of recovery from inactivation. Interacts with KCNIP2; each KCNIP2 monomer interacts with two adjacent KCND3 subunits, through both the N-terminal inactivation ball of a KCND3 subunit and a C-terminal helix from the adjacent KCND3 subunit, clamping them together; this interaction modulates the channel gating kinetics. Regulated through phosphorylation at Ser-569 by CaMK2D. In terms of tissue distribution, highly expressed in heart and brain, in particular in cortex, cerebellum, amygdala and caudate nucleus. Detected at lower levels in liver, skeletal muscle, kidney and pancreas.

It is found in the cell membrane. It localises to the sarcolemma. The protein resides in the cell projection. Its subcellular location is the dendrite. It catalyses the reaction K(+)(in) = K(+)(out). Its function is as follows. Pore-forming (alpha) subunit of voltage-gated A-type potassium channels that mediates transmembrane potassium transport in excitable membranes, in brain and heart. In cardiomyocytes, may generate the transient outward potassium current I(To). In neurons, may conduct the transient subthreshold somatodendritic A-type potassium current (ISA). Kinetics properties are characterized by fast activation at subthreshold membrane potentials, rapid inactivation, and quick recovery from inactivation. Channel properties are modulated by interactions with regulatory subunits. Interaction with the regulatory subunits KCNIP1 or KCNIP2 modulates the channel gating kinetics namely channel activation and inactivation kinetics and rate of recovery from inactivation. Likewise, interaction with DPP6 modulates the channel gating kinetics namely channel activation and inactivation kinetics. This is A-type voltage-gated potassium channel KCND3 (KCND3) from Homo sapiens (Human).